Reading from the N-terminus, the 154-residue chain is uncharacterized protein (154 aa).

5 consecutive transmembrane segments (helical) span residues 5 to 24 (TLII…GVLL), 29 to 48 (FYAA…IYAA), 53 to 75 (PVVV…AIAA), 87 to 109 (IFWV…SMAV), and 124 to 146 (ATDY…LSAI).

The protein localises to the cell membrane. This is an uncharacterized protein from Archaeoglobus fulgidus (strain ATCC 49558 / DSM 4304 / JCM 9628 / NBRC 100126 / VC-16).